A 148-amino-acid chain; its full sequence is Large ribosomal subunit protein bL9 (148 aa).

The protein belongs to the bacterial ribosomal protein bL9 family.

Functionally, binds to the 23S rRNA. In Staphylococcus haemolyticus (strain JCSC1435), this protein is Large ribosomal subunit protein bL9.